Reading from the N-terminus, the 335-residue chain is Methionine import ATP-binding protein MetN 1 (335 aa).

An ABC transporter domain is found at 2 to 242 (IEFQQVHKTY…PQHPTTKRFV (241 aa)). 38-45 (GHSGAGKS) provides a ligand contact to ATP.

It belongs to the ABC transporter superfamily. Methionine importer (TC 3.A.1.24) family. The complex is composed of two ATP-binding proteins (MetN), two transmembrane proteins (MetI) and a solute-binding protein (MetQ).

Its subcellular location is the cell inner membrane. The enzyme catalyses L-methionine(out) + ATP + H2O = L-methionine(in) + ADP + phosphate + H(+). It carries out the reaction D-methionine(out) + ATP + H2O = D-methionine(in) + ADP + phosphate + H(+). Part of the ABC transporter complex MetNIQ involved in methionine import. Responsible for energy coupling to the transport system. The polypeptide is Methionine import ATP-binding protein MetN 1 (Pseudomonas putida (strain ATCC 47054 / DSM 6125 / CFBP 8728 / NCIMB 11950 / KT2440)).